Consider the following 967-residue polypeptide: Glutamate receptor 2.6 (967 aa).

An N-terminal signal peptide occupies residues 1-31 (MSLFNHLLSRALPLWLLFFINFLVLLGKSQQ). Residues 32–590 (EVLQVQVGIV…WVFLKPLTRE (559 aa)) lie on the Extracellular side of the membrane. 7 N-linked (GlcNAc...) asparagine glycosylation sites follow: Asn45, Asn57, Asn121, Asn336, Asn345, Asn424, and Asn550. A helical membrane pass occupies residues 591–611 (LWFLTAASFLYIGIMVWIFEY). Over 612–621 (QASGDFRKQS) the chain is Cytoplasmic. Residues 622-642 (IINKISNVFYFSFSTLFFAHM) form a helical membrane-spanning segment. Topologically, residues 643–651 (RPSESIFTR) are cytoplasmic. A helical transmembrane segment spans residues 652 to 672 (VLVVVWCFVLLILTQSYTATL). Over 673–832 (TSMLTVQELR…DSPIRLDHHS (160 aa)) the chain is Extracellular. A glycan (N-linked (GlcNAc...) asparagine) is linked at Asn795. A helical membrane pass occupies residues 833-853 (FEALFTIVFVVSMLLLLAMLV). Topologically, residues 854–967 (CRRYRQESKS…AALFSRIKSA (114 aa)) are cytoplasmic. Residues 864–874 (GEINANNSPTD) show a composition bias toward polar residues. Residues 864 to 913 (GEINANNSPTDGNMRAPPNQPTDDNMRAPTSPPIDDQVLEPPGPALNEAD) are disordered.

It belongs to the glutamate-gated ion channel (TC 1.A.10.1) family. In terms of assembly, may form heteromers. As to expression, expressed predominantly in roots.

It is found in the membrane. Glutamate-gated receptor that probably acts as a non-selective cation channel. May be involved in light-signal transduction and calcium homeostasis via the regulation of calcium influx into cells. The sequence is that of Glutamate receptor 2.6 (GLR2.6) from Arabidopsis thaliana (Mouse-ear cress).